A 536-amino-acid chain; its full sequence is Dual specificity calcium/calmodulin-dependent 3',5'-cyclic nucleotide phosphodiesterase 1B (536 aa).

The tract at residues 1 to 20 (MELSPRSPPEMLEESDCPSP) is disordered. Residues Ser7 and Ser15 each carry the phosphoserine modification. Calmodulin-binding stretches follow at residues 27-47 (PSKK…KQLE) and 118-141 (EKPK…MFRR). Residues 146–503 (VGPTYSTAVL…QKWKERAASG (358 aa)) enclose the PDEase domain. Residue His223 is the Proton donor of the active site. Zn(2+)-binding residues include His227, His263, Asp264, and Asp370. A Mg(2+)-binding site is contributed by Asp264. 2 disordered regions span residues 447–474 (LADE…VGDP) and 494–536 (QKWK…GNLD). Residues 455–464 (KNQPSFQWRQ) are compositionally biased toward polar residues. 2 positions are modified to phosphoserine: Ser466 and Ser514.

This sequence belongs to the cyclic nucleotide phosphodiesterase family. PDE1 subfamily. In terms of assembly, homodimer. Zn(2+) serves as cofactor. Mg(2+) is required as a cofactor.

The protein resides in the cytoplasm. The protein localises to the cytosol. The enzyme catalyses a nucleoside 3',5'-cyclic phosphate + H2O = a nucleoside 5'-phosphate + H(+). It catalyses the reaction 3',5'-cyclic GMP + H2O = GMP + H(+). It carries out the reaction 3',5'-cyclic AMP + H2O = AMP + H(+). With respect to regulation, type I PDE are activated by the binding of calmodulin in the presence of Ca(2+). Functionally, cyclic nucleotide phosphodiesterase with a dual specificity for the second messengers cAMP and cGMP, which are key regulators of many important physiological processes. Has a preference for cGMP as a substrate. The protein is Dual specificity calcium/calmodulin-dependent 3',5'-cyclic nucleotide phosphodiesterase 1B of Homo sapiens (Human).